A 110-amino-acid chain; its full sequence is Iron-sulfur cluster assembly protein CyaY (110 aa).

The protein belongs to the frataxin family.

Involved in iron-sulfur (Fe-S) cluster assembly. May act as a regulator of Fe-S biogenesis. The polypeptide is Iron-sulfur cluster assembly protein CyaY (Pseudomonas fluorescens (strain SBW25)).